Here is a 245-residue protein sequence, read N- to C-terminus: Ribosomal RNA small subunit methyltransferase J (245 aa).

S-adenosyl-L-methionine is bound by residues 94 to 95, 110 to 111, and Asp-164; these read RD and ER.

Belongs to the methyltransferase superfamily. RsmJ family.

It localises to the cytoplasm. It carries out the reaction guanosine(1516) in 16S rRNA + S-adenosyl-L-methionine = N(2)-methylguanosine(1516) in 16S rRNA + S-adenosyl-L-homocysteine + H(+). Functionally, specifically methylates the guanosine in position 1516 of 16S rRNA. The protein is Ribosomal RNA small subunit methyltransferase J of Dechloromonas aromatica (strain RCB).